A 774-amino-acid polypeptide reads, in one-letter code: RNA exonuclease 5 (774 aa).

The span at 1–19 (MEPEREGTERHPRKVRESR) shows a compositional bias: basic and acidic residues. Residues 1–22 (MEPEREGTERHPRKVRESRQAP) are disordered. One can recognise an Exonuclease domain in the interval 228 to 376 (LFGLDCEMCL…EDARTILELA (149 aa)). 2 RRM domains span residues 505–579 (STVY…RPVT) and 600–679 (GSIY…RHLH).

The sequence is that of RNA exonuclease 5 from Homo sapiens (Human).